A 131-amino-acid chain; its full sequence is MHISLPTRNKSYFRIRTRTYQIGLYHSDSSPIRDISVLHLLIATLCTIFFPIFFSLSKVQVVQWQGTTISKNCIALTMSFPLNAIPGMYLIIAFPRLQTVIPLQRNTPVRITKSVIVKGAVSVPRISSPMH.

2 helical membrane-spanning segments follow: residues isoleucine 35–serine 55 and isoleucine 74–phenylalanine 94.

Its subcellular location is the membrane. The polypeptide is Increased copper sensitivity protein 3 (ICS3) (Saccharomyces cerevisiae (strain ATCC 204508 / S288c) (Baker's yeast)).